Consider the following 418-residue polypeptide: MGILQDLEFRGLINQQTDAEGLEQLLEKESVKLYCGFDPTADSLHIGHMLPVLMLRRFQLAGHQPIALVGGGTGMIGDPSGKKAERTLNTKDTVAYYTESIKNQLSNFLEFENVDNPATMANNYDWLGNLDVISFLRDIGKNFGLNYMLAKDTVASRLETGISFTEFSYMILQSYDFLNLYQHHNCRLQIGGSDQWGNITAGLELIRKSEEDAKAYGLTIPLVTKSDGTKFGKTEGGAIWLDPEKTTPYEFYQFWINTDDRDVVKYLKYFTFLSHEEILELEKQVAEAPEKRAAQKALGAEMTKLVHGEEALEQAIKISAALFSGSVAELTASEIEQGFKDVPSVERTAEDTVLIDLLVESKISPSKRQAREDVTNGAIYVNGERTQALDYVVTEKDRIEGKFTIIRRGKKKYFLIRY.

Tyr-34 serves as a coordination point for L-tyrosine. The 'HIGH' region motif lies at 39 to 48; sequence PTADSLHIGH. Residues Tyr-169 and Gln-173 each contribute to the L-tyrosine site. Positions 230–234 match the 'KMSKS' region motif; the sequence is KFGKT. An ATP-binding site is contributed by Lys-233. The S4 RNA-binding domain occupies 352–418; it reads TVLIDLLVES…GKKKYFLIRY (67 aa).

The protein belongs to the class-I aminoacyl-tRNA synthetase family. TyrS type 1 subfamily. As to quaternary structure, homodimer.

It is found in the cytoplasm. The catalysed reaction is tRNA(Tyr) + L-tyrosine + ATP = L-tyrosyl-tRNA(Tyr) + AMP + diphosphate + H(+). Functionally, catalyzes the attachment of tyrosine to tRNA(Tyr) in a two-step reaction: tyrosine is first activated by ATP to form Tyr-AMP and then transferred to the acceptor end of tRNA(Tyr). This chain is Tyrosine--tRNA ligase 1, found in Bacillus cereus (strain ATCC 10987 / NRS 248).